A 241-amino-acid chain; its full sequence is Carboxy-S-adenosyl-L-methionine synthase (241 aa).

S-adenosyl-L-methionine contacts are provided by residues Y38, 63-65 (GCS), 88-89 (DN), 116-117 (DI), N131, and R198.

It belongs to the class I-like SAM-binding methyltransferase superfamily. Cx-SAM synthase family. In terms of assembly, homodimer.

The catalysed reaction is prephenate + S-adenosyl-L-methionine = carboxy-S-adenosyl-L-methionine + 3-phenylpyruvate + H2O. Functionally, catalyzes the conversion of S-adenosyl-L-methionine (SAM) to carboxy-S-adenosyl-L-methionine (Cx-SAM). This Pasteurella multocida (strain Pm70) protein is Carboxy-S-adenosyl-L-methionine synthase.